Reading from the N-terminus, the 78-residue chain is Probable two-component-system connector protein YcgZ (78 aa).

Probably a connector protein for RcsB/C regulation of biofilm formation, providing additional signal input into the two-component signaling pathway. Partially antagonizes the activities of YmgA and AriR, proteins that, via the Rcs phosphorelay, promote the synthesis of colanic acid, an exopolysaccharide and matrix component. The sequence is that of Probable two-component-system connector protein YcgZ (ycgZ) from Escherichia coli (strain K12).